Consider the following 955-residue polypeptide: Eukaryotic translation initiation factor 3 subunit A (955 aa).

Positions Leu-96 to Thr-127 form a coiled coil. One can recognise a PCI domain in the interval Tyr-325–Ala-498. Coiled-coil stretches lie at residues Ala-533–Lys-636 and Lys-752–Gly-860. Residues Arg-789–Arg-858 are compositionally biased toward basic and acidic residues. Residues Arg-789–Asn-955 are disordered.

Belongs to the eIF-3 subunit A family. As to quaternary structure, component of the eukaryotic translation initiation factor 3 (eIF-3) complex.

Its subcellular location is the cytoplasm. In terms of biological role, RNA-binding component of the eukaryotic translation initiation factor 3 (eIF-3) complex, which is involved in protein synthesis of a specialized repertoire of mRNAs and, together with other initiation factors, stimulates binding of mRNA and methionyl-tRNAi to the 40S ribosome. The eIF-3 complex specifically targets and initiates translation of a subset of mRNAs involved in cell proliferation. The polypeptide is Eukaryotic translation initiation factor 3 subunit A (Yarrowia lipolytica (strain CLIB 122 / E 150) (Yeast)).